A 469-amino-acid polypeptide reads, in one-letter code: IAA-alanine resistance protein 1 (469 aa).

Positions 1-28 (MSFSLRKLLVPILVLVLFLDLCVESGFS) are cleaved as a signal peptide. Positions 33–58 (ARDDHVHHHGGGCSHSHDHDHDHDHD) are disordered. Over residues 47–58 (HSHDHDHDHDHD) the composition is skewed to basic and acidic residues. A run of 2 helical transmembrane segments spans residues 114 to 134 (CSLL…IMFV) and 141 to 161 (WFVD…AFLH). Residues 170 to 197 (GHSHSNDHHENHDHHDHSHSDSPSHSHS) are disordered. The span at 173-193 (HSNDHHENHDHHDHSHSDSPS) shows a compositional bias: basic and acidic residues. Residues 201–221 (LSVGLSVLAGIVVFLLVEKLV) traverse the membrane as a helical segment. The tract at residues 228–315 (SSGSNTWGHH…GKSDKPEQVE (88 aa)) is disordered. A compositionally biased stretch (basic residues) spans 235-246 (GHHHHHHHAGSK). Basic and acidic residues predominate over residues 247 to 256 (KLKDEGDHNN). Polar residues predominate over residues 257 to 279 (LDQQSSSDAIVNSSEKVSGGSTD). The segment covering 292 to 315 (ATDKSDSGTEITSDGKSDKPEQVE) has biased composition (basic and acidic residues). The next 3 membrane-spanning stretches (helical) occupy residues 387–407 (LFFN…VLVW), 415–435 (SLIE…GVLA), and 448–468 (SACH…ISLI).

The protein belongs to the ZIP transporter (TC 2.A.5) family. KE4/Catsup subfamily.

Its subcellular location is the membrane. Its function is as follows. May participate in auxin metabolism or response. Probable transporter. This Arabidopsis thaliana (Mouse-ear cress) protein is IAA-alanine resistance protein 1 (IAR1).